A 428-amino-acid chain; its full sequence is Gamma-glutamyl phosphate reductase (428 aa).

The protein belongs to the gamma-glutamyl phosphate reductase family.

The protein localises to the cytoplasm. The enzyme catalyses L-glutamate 5-semialdehyde + phosphate + NADP(+) = L-glutamyl 5-phosphate + NADPH + H(+). The protein operates within amino-acid biosynthesis; L-proline biosynthesis; L-glutamate 5-semialdehyde from L-glutamate: step 2/2. In terms of biological role, catalyzes the NADPH-dependent reduction of L-glutamate 5-phosphate into L-glutamate 5-semialdehyde and phosphate. The product spontaneously undergoes cyclization to form 1-pyrroline-5-carboxylate. This chain is Gamma-glutamyl phosphate reductase, found in Zymomonas mobilis subsp. mobilis (strain ATCC 31821 / ZM4 / CP4).